The sequence spans 263 residues: Type III pantothenate kinase (263 aa).

6–13 (DVGNTNIK) contributes to the ATP binding site. 108-111 (GSDR) serves as a coordination point for substrate. The active-site Proton acceptor is the Asp110. Asp131 provides a ligand contact to K(+). Position 134 (Thr134) interacts with ATP. Thr187 is a substrate binding site.

Belongs to the type III pantothenate kinase family. Homodimer. It depends on NH4(+) as a cofactor. K(+) serves as cofactor.

Its subcellular location is the cytoplasm. The catalysed reaction is (R)-pantothenate + ATP = (R)-4'-phosphopantothenate + ADP + H(+). The protein operates within cofactor biosynthesis; coenzyme A biosynthesis; CoA from (R)-pantothenate: step 1/5. Functionally, catalyzes the phosphorylation of pantothenate (Pan), the first step in CoA biosynthesis. This is Type III pantothenate kinase from Anaplasma phagocytophilum (strain HZ).